The chain runs to 254 residues: Thiazole synthase (254 aa).

Residue Lys-95 is the Schiff-base intermediate with DXP of the active site. 1-deoxy-D-xylulose 5-phosphate contacts are provided by residues Gly-156, Ala-182–Gly-183, and Asn-204–Thr-205.

It belongs to the ThiG family. In terms of assembly, homotetramer. Forms heterodimers with either ThiH or ThiS.

The protein localises to the cytoplasm. It carries out the reaction [ThiS sulfur-carrier protein]-C-terminal-Gly-aminoethanethioate + 2-iminoacetate + 1-deoxy-D-xylulose 5-phosphate = [ThiS sulfur-carrier protein]-C-terminal Gly-Gly + 2-[(2R,5Z)-2-carboxy-4-methylthiazol-5(2H)-ylidene]ethyl phosphate + 2 H2O + H(+). The protein operates within cofactor biosynthesis; thiamine diphosphate biosynthesis. Functionally, catalyzes the rearrangement of 1-deoxy-D-xylulose 5-phosphate (DXP) to produce the thiazole phosphate moiety of thiamine. Sulfur is provided by the thiocarboxylate moiety of the carrier protein ThiS. In vitro, sulfur can be provided by H(2)S. The protein is Thiazole synthase of Shewanella piezotolerans (strain WP3 / JCM 13877).